Reading from the N-terminus, the 534-residue chain is MSENKTRVDNAATGDIQHQGKDIFFAAVETTRMPMIVTDPNRPDNPIIFSNRAFLEMTGYTAEEILGTNCRFLQGPDTDPAVVQSIRDAIAQRNDISAEIINYRKDGSSFWNALFISPVYNDAGDLIYFFASQLDISRRKDAEEALRQAQKMEALGQLTGGIAHDFNNLLQVMGGYIDLIGSAAEKPVIDVQRVQRSVYHAKSAVERASTLTKQLLAFARKQKLQGRVLNLNGLVSIVEPLIERTFGPEVAIETDLEPALKNCRIDPTQAEVALLNIFINARDALIGRENPKVFIETRNLLVDELANMSYDGLLPGRYVSIAVTDNGIGMPASIRDRVMDPFFTTKEEGKGSGLGLSMVYGFAKQSGGAARIYTEEGVGTTLRLYFPVDEAGLTNTESPQASDRRLGSSERILIVEDRPDVAELAKMVLDDYGYVSEIVLNAREALKKFESGNMYDLLFTDLIMPGGMNGVMLAREVRRRYPKVKVLLTTGYAESSIERTDIGGSEFDVVSKPCMPHDLARKVRQVLDGPNGIA.

The PAS domain maps to 20–93 (GKDIFFAAVE…QSIRDAIAQR (74 aa)). C70 is modified (S-4a-FMN cysteine). In terms of domain architecture, PAC spans 94-148 (NDISAEIINYRKDGSSFWNALFISPVYNDAGDLIYFFASQLDISRRKDAEEALRQ). One can recognise a Histidine kinase domain in the interval 161-390 (GIAHDFNNLL…TLRLYFPVDE (230 aa)). Position 164 is a phosphohistidine; by autocatalysis (H164). Residues 411–527 (RILIVEDRPD…DLARKVRQVL (117 aa)) enclose the Response regulatory domain. D461 carries the post-translational modification 4-aspartylphosphate.

In terms of processing, FMN binds covalently to cysteine after exposure to blue light and this bond is spontaneously broken in the dark.

It carries out the reaction ATP + protein L-histidine = ADP + protein N-phospho-L-histidine.. Photosensitive kinase and response regulator that is involved in increased bacterial virulence upon exposure to light. The polypeptide is Blue-light-activated protein (Pseudomonas syringae pv. tomato (strain ATCC BAA-871 / DC3000)).